A 94-amino-acid polypeptide reads, in one-letter code: MMSPTLMILISITTMAILSGESFGAMPAQCNSEFLEELPPRLRKICVAIARIWDAREMNDFVDDREYRENLPRYDSSVKRQDVDHVFLRFGKRR.

The first 24 residues, 1-24 (MMSPTLMILISITTMAILSGESFG), serve as a signal peptide directing secretion. Residues 25–80 (AMPAQCNSEFLEELPPRLRKICVAIARIWDAREMNDFVDDREYRENLPRYDSSVKR) constitute a propeptide that is removed on maturation. At glutamine 81 the chain carries Pyrrolidone carboxylic acid. Phenylalanine 90 is modified (phenylalanine amide).

Expressed throughout the nervous system (at protein level).

It is found in the secreted. Myoinhibiting neuropeptide. This chain is Myosuppressin, found in Camponotus floridanus (Florida carpenter ant).